A 168-amino-acid chain; its full sequence is DAZ-associated protein 2 (168 aa).

A compositionally biased stretch (low complexity) spans 1 to 13; sequence MNSKGQYPTQPTY. Residues 1–25 are disordered; that stretch reads MNSKGQYPTQPTYPVQPPGNPVYPQ. A PPAY motif is present at residues 39–42; it reads PPAY. A Phosphoserine modification is found at Ser77.

As to quaternary structure, interacts with SOX6. Interacts with DAZ1 and DAZL. Interacts with IL17RB. May interact with FAM168B. Interacts with INCA1. Interacts with EIF4G1 and EIF4G2. Interacts (via PPAY motif) with NEDD4 (via WW domains). Interacts with transcription factor TCF4; the interaction results in localization of DAZAP2 to the nucleus. Interacts with transcription factors TCF7 and TCF7L1. Interacts with transcription factor LEF1. Interacts with serine/threonine-protein kinase HIPK2; the interaction results in phosphorylation of DAZAP2 which causes localization of DAZAP2 to the nucleus, reduces interaction of DAZAP2 with HIPK2 and prevents DAZAP2-dependent degradation of HIPK2. Interacts with ubiquitin ligase SIAH1; the interaction is decreased following phosphorylation of DAZAP2 by HIPK2. Interacts with TP53; the interaction is triggered by DNA damage. Ubiquitinated by SMURF2, leading to proteasomal degradation. Ubiquitinated by NEDD4, leading to proteasomal degradation. Post-translationally, following DNA damage, phosphorylated by HIPK2 which promotes DAZAP2 localization to the nucleus, reduces interaction of DAZAP2 with HIPK2 and SIAH1, and prevents DAZAP2-dependent ubiquitination of HIPK2 by E3 ubiquitin-protein ligase SIAH1 and subsequent HIPK2 proteasomal degradation.

The protein localises to the cytoplasm. It is found in the nucleus. Its subcellular location is the nucleus speckle. It localises to the nuclear body. The protein resides in the stress granule. Functionally, in unstressed cells, promotes SIAH1-mediated polyubiquitination and degradation of the serine/threonine-protein kinase HIPK2, probably by acting as a loading factor that potentiates complex formation between HIPK2 and ubiquitin ligase SIAH1. In response to DNA damage, localizes to the nucleus following phosphorylation by HIPK2 and modulates the expression of a subset of TP53/p53 target genes by binding to TP53 at target gene promoters. This limits the expression of a number of cell death-mediating TP53 target genes, reducing DNA damage-induced cell death. Enhances the binding of transcription factor TCF7L2/TCF4, a Wnt signaling pathway effector, to the promoters of target genes. Plays a role in stress granule formation. The sequence is that of DAZ-associated protein 2 from Macaca fascicularis (Crab-eating macaque).